We begin with the raw amino-acid sequence, 393 residues long: L-methionine gamma-lyase (393 aa).

Pyridoxal 5'-phosphate is bound by residues Y63–R65 and G93–M94. Residue Y119 coordinates L-homocysteine. S206–T208 contributes to the pyridoxal 5'-phosphate binding site. An N6-(pyridoxal phosphate)lysine modification is found at K209. R367 lines the L-homocysteine pocket. R367 is a binding site for L-methionine.

This sequence belongs to the trans-sulfuration enzymes family. L-methionine gamma-lyase subfamily. In terms of assembly, homotetramer. It depends on pyridoxal 5'-phosphate as a cofactor.

The enzyme catalyses L-methionine + H2O = methanethiol + 2-oxobutanoate + NH4(+). It catalyses the reaction L-homocysteine + H2O = 2-oxobutanoate + hydrogen sulfide + NH4(+) + H(+). Functionally, catalyzes the alpha,gamma-elimination of L-methionine to produce methanethiol, 2-oxobutanoate and ammonia. Is also able to catalyze the alpha,gamma-elimination of L-homocysteine. The chain is L-methionine gamma-lyase from Brevibacterium sandarakinum.